A 51-amino-acid polypeptide reads, in one-letter code: Large ribosomal subunit protein eL40 (51 aa).

Zn(2+)-binding residues include Cys17, Cys20, Cys31, and Cys34.

This sequence belongs to the eukaryotic ribosomal protein eL40 family. In terms of assembly, part of the 50S ribosomal subunit. Zn(2+) is required as a cofactor.

The polypeptide is Large ribosomal subunit protein eL40 (Thermococcus kodakarensis (strain ATCC BAA-918 / JCM 12380 / KOD1) (Pyrococcus kodakaraensis (strain KOD1))).